Consider the following 317-residue polypeptide: Melanocyte-stimulating hormone receptor (317 aa).

At 1 to 37 (MPVQGSQRRLLGSLNSTPTATPRLGLAANQTGARCLE) the chain is on the extracellular side. A glycan (N-linked (GlcNAc...) asparagine) is linked at Asn29. The helical transmembrane segment at 38 to 63 (VSIPDGLFLSLGLVSLVENVLVVVAI) threads the bilayer. At 64 to 72 (ARNRNLHSP) the chain is on the cytoplasmic side. The helical transmembrane segment at 73 to 93 (MYCFICCLALSDLLVSGSNML) threads the bilayer. Topologically, residues 94-118 (DTAVILLLEAGALAARAAVVQQLDN) are extracellular. A helical transmembrane segment spans residues 119–140 (VIDVITCSSMLSSLCFLGAIAV). Residues 141 to 163 (DRYISIFYALRYHSIVTLRRARR) are Cytoplasmic-facing. Residues 164–183 (VVAAIWVASILFSTLFIAYC) traverse the membrane as a helical segment. The Extracellular segment spans residues 184–191 (DHAAVLLC). The chain crosses the membrane as a helical span at residues 192-211 (LVVFFLAMLVLMAVLYVHML). Residues 212 to 240 (ARACQHAQGIAQLHKRQRPAHQGVGLKGA) lie on the Cytoplasmic side of the membrane. A helical membrane pass occupies residues 241–266 (ATLTILLGIFFLCWGPFFLHLTLIVL). Residues 267–279 (CPQHPTCSCIFKN) lie on the Extracellular side of the membrane. Residues 280–300 (FNLFLTLIICNAIIDPLIYAF) traverse the membrane as a helical segment. Topologically, residues 301 to 317 (RSQELRRTLKKVLLCSW) are cytoplasmic. Residue Cys315 is the site of S-palmitoyl cysteine attachment.

This sequence belongs to the G-protein coupled receptor 1 family. As to quaternary structure, interacts with MGRN1, but does not undergo MGRN1-mediated ubiquitination; this interaction competes with GNAS-binding and thus inhibits agonist-induced cAMP production. Interacts with OPN3; the interaction results in a decrease in MC1R-mediated cAMP signaling and ultimately a decrease in melanin production in melanocytes.

It is found in the cell membrane. In terms of biological role, receptor for MSH (alpha, beta and gamma) and ACTH. The activity of this receptor is mediated by G proteins which activate adenylate cyclase. Mediates melanogenesis, the production of eumelanin (black/brown) and phaeomelanin (red/yellow), via regulation of cAMP signaling in melanocytes. This is Melanocyte-stimulating hormone receptor (MC1R) from Trachypithecus francoisi (Francois' leaf monkey).